Reading from the N-terminus, the 471-residue chain is Glutamate--tRNA ligase (471 aa).

Positions 9 to 19 (PSPTGYLHVGG) match the 'HIGH' region motif. Zn(2+) is bound by residues C98, C100, C125, and H127. The 'KMSKS' region signature appears at 237–241 (KLSKR). An ATP-binding site is contributed by K240.

This sequence belongs to the class-I aminoacyl-tRNA synthetase family. Glutamate--tRNA ligase type 1 subfamily. Monomer. The cofactor is Zn(2+).

It localises to the cytoplasm. The enzyme catalyses tRNA(Glu) + L-glutamate + ATP = L-glutamyl-tRNA(Glu) + AMP + diphosphate. Functionally, catalyzes the attachment of glutamate to tRNA(Glu) in a two-step reaction: glutamate is first activated by ATP to form Glu-AMP and then transferred to the acceptor end of tRNA(Glu). This Enterobacter sp. (strain 638) protein is Glutamate--tRNA ligase.